The chain runs to 429 residues: Cytochrome bc1 complex Rieske iron-sulfur subunit (429 aa).

Positions 1 to 45 are disordered; the sequence is MSRADDDAVGVPPTCGGRSDEEERRIVPGPNPQDGAKDGAKATAV. 3 helical membrane passes run 96 to 116, 137 to 157, and 207 to 227; these read VAVWLLLGGVFGLALLLIFLF, PLYGLTFGLSILSIAIGAVLY, and FGVGMGAFGLGTLVAFAGGLI. Residues 316-410 enclose the Rieske domain; sequence RNPVMLIRIK…ITIDTDGYLV (95 aa). Residues Cys-353, His-355, Cys-372, and His-375 each contribute to the [2Fe-2S] cluster site. Cysteines 358 and 374 form a disulfide.

Belongs to the Rieske iron-sulfur protein family. As to quaternary structure, the cytochrome bc1 complex is composed of a cytochrome b (QcrB), the Rieske iron-sulfur protein (QcrA) and a diheme cytochrome c (QcrC) subunit. The cofactor is [2Fe-2S] cluster.

The protein localises to the cell membrane. Functionally, iron-sulfur subunit of the cytochrome bc1 complex, an essential component of the respiratory electron transport chain required for ATP synthesis. The bc1 complex catalyzes the oxidation of menaquinol and the reduction of cytochrome c in the respiratory chain. The bc1 complex operates through a Q-cycle mechanism that couples electron transfer to generation of the proton gradient that drives ATP synthesis. The chain is Cytochrome bc1 complex Rieske iron-sulfur subunit (qcrA) from Mycobacterium bovis (strain ATCC BAA-935 / AF2122/97).